A 178-amino-acid polypeptide reads, in one-letter code: Large ribosomal subunit protein uL10 (178 aa).

The protein belongs to the universal ribosomal protein uL10 family. In terms of assembly, part of the ribosomal stalk of the 50S ribosomal subunit. The N-terminus interacts with L11 and the large rRNA to form the base of the stalk. The C-terminus forms an elongated spine to which L12 dimers bind in a sequential fashion forming a multimeric L10(L12)X complex.

Its function is as follows. Forms part of the ribosomal stalk, playing a central role in the interaction of the ribosome with GTP-bound translation factors. The chain is Large ribosomal subunit protein uL10 from Dictyoglomus turgidum (strain DSM 6724 / Z-1310).